Reading from the N-terminus, the 990-residue chain is Presequence protease, mitochondrial (990 aa).

Residues 1 to 25 (MLRLKSLKKPVQAVVRRFATTSAPT) constitute a mitochondrion transit peptide. His89 contributes to the Zn(2+) binding site. Glu92 serves as the catalytic Proton acceptor. His93 serves as a coordination point for Zn(2+). Glu165 is a catalytic residue. Residue Glu190 participates in Zn(2+) binding.

The protein belongs to the peptidase M16 family. PreP subfamily. As to quaternary structure, monomer and homodimer; homodimerization is induced by binding of the substrate. Requires Zn(2+) as cofactor.

It is found in the mitochondrion intermembrane space. Its subcellular location is the mitochondrion matrix. Functionally, degrades mitochondrial transit peptides after their cleavage in the intermembrane space or in the matrix, and presequence peptides; clearance of these peptides is required to keep the presequence processing machinery running. Preferentially cleaves the N-terminal side of paired basic amino acid residues. Also degrades other unstructured peptides. May function as an ATP-dependent peptidase as opposed to a metalloendopeptidase. The sequence is that of Presequence protease, mitochondrial (CYM1) from Yarrowia lipolytica (strain CLIB 122 / E 150) (Yeast).